Reading from the N-terminus, the 85-residue chain is MEGEGRREDGDCSYLCIPFNSIRDIFQSFFTRFRGLTPDNSPVTISQEVEEETEVVNIPRSVVSGNVAARKGKQQTSSGKGGGTN.

The propeptide occupies 1–62; sequence MEGEGRREDG…TEVVNIPRSV (62 aa). The disordered stretch occupies residues 66-85; the sequence is NVAARKGKQQTSSGKGGGTN.

Belongs to the brassicaceae elicitor peptide family.

Elicitor of plant defense. In Arabidopsis thaliana (Mouse-ear cress), this protein is Elicitor peptide 7 (PEP7).